The primary structure comprises 71 residues: Ceratotoxin-A (71 aa).

Positions 1 to 23 are cleaved as a signal peptide; the sequence is MANLKAVFLICIVAFIALQCVVA. Propeptides lie at residues 24 to 35 and 65 to 71; these read EPAAEDSVVVKR and VAAGLVG.

Homomer of four to six subunits.

The protein resides in the secreted. Its function is as follows. Female-specific peptides with potent activity against Gram-positive and Gram-negative bacteria. They have as well hemolytic activity. The chain is Ceratotoxin-A (CTXA1) from Ceratitis capitata (Mediterranean fruit fly).